We begin with the raw amino-acid sequence, 153 residues long: 6,7-dimethyl-8-ribityllumazine synthase (153 aa).

5-amino-6-(D-ribitylamino)uracil-binding positions include Phe22, 56–58 (AFE), and 80–82 (TVI). 85-86 (ST) provides a ligand contact to (2S)-2-hydroxy-3-oxobutyl phosphate. The Proton donor role is filled by His88. Residue Phe113 coordinates 5-amino-6-(D-ribitylamino)uracil. Arg127 serves as a coordination point for (2S)-2-hydroxy-3-oxobutyl phosphate.

This sequence belongs to the DMRL synthase family. Forms an icosahedral capsid composed of 60 subunits, arranged as a dodecamer of pentamers.

It carries out the reaction (2S)-2-hydroxy-3-oxobutyl phosphate + 5-amino-6-(D-ribitylamino)uracil = 6,7-dimethyl-8-(1-D-ribityl)lumazine + phosphate + 2 H2O + H(+). The protein operates within cofactor biosynthesis; riboflavin biosynthesis; riboflavin from 2-hydroxy-3-oxobutyl phosphate and 5-amino-6-(D-ribitylamino)uracil: step 1/2. In terms of biological role, catalyzes the formation of 6,7-dimethyl-8-ribityllumazine by condensation of 5-amino-6-(D-ribitylamino)uracil with 3,4-dihydroxy-2-butanone 4-phosphate. This is the penultimate step in the biosynthesis of riboflavin. This chain is 6,7-dimethyl-8-ribityllumazine synthase, found in Actinobacillus pleuropneumoniae serotype 7 (strain AP76).